The chain runs to 257 residues: Zinc uptake system ATP-binding protein ZurA (257 aa).

An ABC transporter domain is found at Ile-5–Glu-241. Gly-37 to Ser-44 contributes to the ATP binding site.

Belongs to the ABC transporter superfamily.

Involved in a zinc uptake transport system. The polypeptide is Zinc uptake system ATP-binding protein ZurA (zurA) (Listeria monocytogenes serovar 1/2a (strain ATCC BAA-679 / EGD-e)).